The primary structure comprises 420 residues: Gamma-glutamyl phosphate reductase (420 aa).

The protein belongs to the gamma-glutamyl phosphate reductase family.

The protein localises to the cytoplasm. The catalysed reaction is L-glutamate 5-semialdehyde + phosphate + NADP(+) = L-glutamyl 5-phosphate + NADPH + H(+). It participates in amino-acid biosynthesis; L-proline biosynthesis; L-glutamate 5-semialdehyde from L-glutamate: step 2/2. Functionally, catalyzes the NADPH-dependent reduction of L-glutamate 5-phosphate into L-glutamate 5-semialdehyde and phosphate. The product spontaneously undergoes cyclization to form 1-pyrroline-5-carboxylate. The protein is Gamma-glutamyl phosphate reductase of Streptococcus pneumoniae serotype 4 (strain ATCC BAA-334 / TIGR4).